The chain runs to 483 residues: GTPase Der (483 aa).

2 EngA-type G domains span residues 3-167 (FTLA…GEER) and 212-387 (LRIA…EIWN). GTP is bound by residues 9-16 (GRPNVGKS), 56-60 (DTAGL), 119-122 (NKAE), 218-225 (GRPNAGKS), 265-269 (DTAGM), and 330-333 (NKWD). A KH-like domain is found at 388 to 472 (RRISTGRLNR…PIRLSLRTSD (85 aa)).

It belongs to the TRAFAC class TrmE-Era-EngA-EngB-Septin-like GTPase superfamily. EngA (Der) GTPase family. In terms of assembly, associates with the 50S ribosomal subunit.

In terms of biological role, GTPase that plays an essential role in the late steps of ribosome biogenesis. This chain is GTPase Der, found in Brucella suis (strain ATCC 23445 / NCTC 10510).